Consider the following 259-residue polypeptide: 3-deoxy-manno-octulosonate cytidylyltransferase (259 aa).

The protein belongs to the KdsB family.

Its subcellular location is the cytoplasm. It carries out the reaction 3-deoxy-alpha-D-manno-oct-2-ulosonate + CTP = CMP-3-deoxy-beta-D-manno-octulosonate + diphosphate. Its pathway is nucleotide-sugar biosynthesis; CMP-3-deoxy-D-manno-octulosonate biosynthesis; CMP-3-deoxy-D-manno-octulosonate from 3-deoxy-D-manno-octulosonate and CTP: step 1/1. It functions in the pathway bacterial outer membrane biogenesis; lipopolysaccharide biosynthesis. In terms of biological role, activates KDO (a required 8-carbon sugar) for incorporation into bacterial lipopolysaccharide in Gram-negative bacteria. In Xanthomonas axonopodis pv. citri (strain 306), this protein is 3-deoxy-manno-octulosonate cytidylyltransferase.